A 1641-amino-acid polypeptide reads, in one-letter code: Alpha-2-macroglobulin (1641 aa).

An N-terminal signal peptide occupies residues 1-31; that stretch reads MRDRVAMMLRPLVRGWIPRAVLLLTVAFSFG. Cysteine 32 carries N-palmitoyl cysteine lipidation. Cysteine 32 carries S-diacylglycerol cysteine lipidation. Residues 1166-1169 constitute a cross-link (isoglutamyl cysteine thioester (Cys-Gln)); sequence CAEQ.

The protein belongs to the protease inhibitor I39 (alpha-2-macroglobulin) family. Bacterial alpha-2-macroglobulin subfamily.

It localises to the cell membrane. Its function is as follows. Protects the bacterial cell from host peptidases. The polypeptide is Alpha-2-macroglobulin (Xylella fastidiosa (strain Temecula1 / ATCC 700964)).